The primary structure comprises 60 residues: MAQIKITLTKSPIGRKPEQRKTVVALGLGKLNSSVIKEDNAAIRGMVTAISHLVTVEDVK.

This sequence belongs to the universal ribosomal protein uL30 family. As to quaternary structure, part of the 50S ribosomal subunit.

This chain is Large ribosomal subunit protein uL30, found in Streptococcus equi subsp. equi (strain 4047).